Reading from the N-terminus, the 465-residue chain is MRYFALTDLTKPTAKFTTDAMELRQISNAYLNQAQAYLQKGLKQLKKDYKNAILYTPKTEYKRFLKWKQTFLQDLNQTQKRFFIVRAQHFSYVLLFNLLDEQVEAVIATFNNFLDEHRLEAQSKQFDLDTAVNELHDYFDQLQKNTAYSEDLPTHLTQKTEQLINARNTQLTNLLNKIATTKPPLNKQQRLLASFRNYHEHLFLKNEVKKVTWLNEPRAKKESVTPDEEHIIELKNVYKYITNGVTTNAVLKGIDLKLKAHDFIVILGPSGSGKTTLLNIISGMDRPSSGSVVVNGQEMICMNDRQLTNFRRNYVGYIFQQYGLLPNLTVRENVEVGANLQRNPDKRINIDELLEAVGMKHLQKKLPNELSGGQQQRVSIARAFAKNPLLIFGDEPTGALDLEMTQIVLKQFLAIKQRYKTTMVIVTHNNLIAQLADLVIYVADGKIQALQANPNPKQVEDINWI.

The ABC transporter domain occupies 232–465; that stretch reads IELKNVYKYI…PKQVEDINWI (234 aa). 268–275 is a binding site for ATP; the sequence is GPSGSGKT.

The protein belongs to the ABC transporter superfamily.

The protein is Putative ABC transporter ATP-binding protein MG065 homolog of Mycoplasma pneumoniae (strain ATCC 29342 / M129 / Subtype 1) (Mycoplasmoides pneumoniae).